A 392-amino-acid chain; its full sequence is 4-hydroxy-3-methylbut-2-en-1-yl diphosphate synthase (flavodoxin) (392 aa).

Positions 280, 283, 315, and 322 each coordinate [4Fe-4S] cluster. Residues 371–380 (TEKGSDHCSE) are compositionally biased toward basic and acidic residues. A disordered region spans residues 371–392 (TEKGSDHCSETTRSGSPVVTVN). Over residues 381–392 (TTRSGSPVVTVN) the composition is skewed to polar residues.

The protein belongs to the IspG family. Requires [4Fe-4S] cluster as cofactor.

It catalyses the reaction (2E)-4-hydroxy-3-methylbut-2-enyl diphosphate + oxidized [flavodoxin] + H2O + 2 H(+) = 2-C-methyl-D-erythritol 2,4-cyclic diphosphate + reduced [flavodoxin]. It functions in the pathway isoprenoid biosynthesis; isopentenyl diphosphate biosynthesis via DXP pathway; isopentenyl diphosphate from 1-deoxy-D-xylulose 5-phosphate: step 5/6. In terms of biological role, converts 2C-methyl-D-erythritol 2,4-cyclodiphosphate (ME-2,4cPP) into 1-hydroxy-2-methyl-2-(E)-butenyl 4-diphosphate. This Mycobacterium leprae (strain Br4923) protein is 4-hydroxy-3-methylbut-2-en-1-yl diphosphate synthase (flavodoxin).